Consider the following 259-residue polypeptide: Tryptophan synthase alpha chain (259 aa).

Catalysis depends on proton acceptor residues Glu-52 and Asp-63.

Belongs to the TrpA family. Tetramer of two alpha and two beta chains.

It carries out the reaction (1S,2R)-1-C-(indol-3-yl)glycerol 3-phosphate + L-serine = D-glyceraldehyde 3-phosphate + L-tryptophan + H2O. It functions in the pathway amino-acid biosynthesis; L-tryptophan biosynthesis; L-tryptophan from chorismate: step 5/5. Functionally, the alpha subunit is responsible for the aldol cleavage of indoleglycerol phosphate to indole and glyceraldehyde 3-phosphate. This is Tryptophan synthase alpha chain from Streptococcus sanguinis (strain SK36).